We begin with the raw amino-acid sequence, 100 residues long: Aspartyl/glutamyl-tRNA(Asn/Gln) amidotransferase subunit C (100 aa).

This sequence belongs to the GatC family. Heterotrimer of A, B and C subunits.

It carries out the reaction L-glutamyl-tRNA(Gln) + L-glutamine + ATP + H2O = L-glutaminyl-tRNA(Gln) + L-glutamate + ADP + phosphate + H(+). The catalysed reaction is L-aspartyl-tRNA(Asn) + L-glutamine + ATP + H2O = L-asparaginyl-tRNA(Asn) + L-glutamate + ADP + phosphate + 2 H(+). Allows the formation of correctly charged Asn-tRNA(Asn) or Gln-tRNA(Gln) through the transamidation of misacylated Asp-tRNA(Asn) or Glu-tRNA(Gln) in organisms which lack either or both of asparaginyl-tRNA or glutaminyl-tRNA synthetases. The reaction takes place in the presence of glutamine and ATP through an activated phospho-Asp-tRNA(Asn) or phospho-Glu-tRNA(Gln). The chain is Aspartyl/glutamyl-tRNA(Asn/Gln) amidotransferase subunit C from Dictyoglomus turgidum (strain DSM 6724 / Z-1310).